The following is a 414-amino-acid chain: Hydroxysqualene dehydroxylase (414 aa).

It belongs to the HpnE family.

The catalysed reaction is squalene + FAD + H2O + H(+) = hydroxysqualene + FADH2. It functions in the pathway secondary metabolite biosynthesis; hopanoid biosynthesis. Functionally, involved in the biosynthesis of the hopanoid precursor squalene (SQ) from farnesyl diphosphate (FPP). Catalyzes the third (last) step, the reduction of hydroxysqualene (HSQ) to SQ. In Zymomonas mobilis subsp. mobilis (strain ATCC 31821 / ZM4 / CP4), this protein is Hydroxysqualene dehydroxylase.